Here is a 553-residue protein sequence, read N- to C-terminus: Solute carrier family 2, facilitated glucose transporter member 10 (553 aa).

Residues 1-15 are Cytoplasmic-facing; the sequence is MGLRSTTLVLAATSS. Residues 16-36 form a helical membrane-spanning segment; sequence LLGGLIFGYELGIISGALLML. Over 37-48 the chain is Extracellular; sequence KTVFQLTCFEQE. A helical membrane pass occupies residues 49–69; that stretch reads ALVSAVLFGALLASLIGGFII. Residues 70–82 are Cytoplasmic-facing; the sequence is DRSGRRTSIMGSN. Residues 83-103 form a helical membrane-spanning segment; that stretch reads LVVLAGSIILIATSSFWWLVV. Topologically, residues 104–105 are extracellular; the sequence is GR. A helical membrane pass occupies residues 106 to 126; the sequence is VTVGFAISISSMACCIYVSEI. At 127–132 the chain is on the cytoplasmic side; sequence VRPHQR. The chain crosses the membrane as a helical span at residues 133 to 153; the sequence is GTLVSLYETGITVGILISYAM. Topologically, residues 154-165 are extracellular; the sequence is NYFLSAVNDGWK. The chain crosses the membrane as a helical span at residues 166 to 186; the sequence is YMFGLAIIPAAFQFIVILFLP. The Cytoplasmic portion of the chain corresponds to 187–240; that stretch reads SKPHTLNFWEQDSDNGFIELEEAGESGEFKPDTYDKQYTFLDLFRSKDNMRTRT. A helical membrane pass occupies residues 241 to 261; the sequence is LLGLGLVLFQQFTGQPNVLYY. Position 250–251 (250–251) interacts with D-glucose; sequence QQ. Topologically, residues 262–277 are extracellular; that stretch reads ASTIFRSVGFQSNSSA. N274 is a glycosylation site (N-linked (GlcNAc...) asparagine). A helical transmembrane segment spans residues 278–298; the sequence is VLASVGLGVVKVASTLIAICF. Residues 299-305 are Cytoplasmic-facing; the sequence is ADKAGRR. A helical transmembrane segment spans residues 306-326; the sequence is ILLLAGCIVMTIAISGIGIVS. Over 327–413 the chain is Extracellular; sequence FMVELDSHRD…PPAGPDSNYA (87 aa). N-linked (GlcNAc...) asparagine glycosylation is found at N344, N351, and N400. The helical transmembrane segment at 414 to 434 threads the bilayer; it reads ILNWITLLSMMAFVSAFSIGF. Residues 435–462 are Cytoplasmic-facing; sequence GPMTWLVLSEIYPADIRGRAFAFCNSFN. W439 is a binding site for D-glucose. A helical transmembrane segment spans residues 463-482; that stretch reads WAANLLITLTFLEVIGSIGL. Residue G483 is a topological domain, extracellular. Residues 484 to 504 form a helical membrane-spanning segment; it reads WTFLLYGGVGLLAIAFIYFFI. Residues 505–553 are Cytoplasmic-facing; it reads PETKGQSLEEIDQQLSSKRISKRRETSKGVRKRPSTGPPYQRVGKSNWT. Residues 522-553 form a disordered region; sequence KRISKRRETSKGVRKRPSTGPPYQRVGKSNWT.

Belongs to the major facilitator superfamily. Sugar transporter (TC 2.A.1.1) family. Glucose transporter subfamily.

Its subcellular location is the endomembrane system. It localises to the cytoplasm. It is found in the perinuclear region. It carries out the reaction D-glucose(out) = D-glucose(in). Its function is as follows. Facilitative glucose transporter required for the development of the cardiovascular system. This chain is Solute carrier family 2, facilitated glucose transporter member 10, found in Xenopus laevis (African clawed frog).